The sequence spans 95 residues: MSINQHEIEHVAKLARLTLRDDEKQLFTGQMEAILAYVETLNELNTDDIAPTSHAVPMENAFRPDCVAPSIGHDRALANAPDKNETYFRVPPVIE.

Belongs to the GatC family. As to quaternary structure, heterotrimer of A, B and C subunits.

It carries out the reaction L-glutamyl-tRNA(Gln) + L-glutamine + ATP + H2O = L-glutaminyl-tRNA(Gln) + L-glutamate + ADP + phosphate + H(+). The enzyme catalyses L-aspartyl-tRNA(Asn) + L-glutamine + ATP + H2O = L-asparaginyl-tRNA(Asn) + L-glutamate + ADP + phosphate + 2 H(+). Allows the formation of correctly charged Asn-tRNA(Asn) or Gln-tRNA(Gln) through the transamidation of misacylated Asp-tRNA(Asn) or Glu-tRNA(Gln) in organisms which lack either or both of asparaginyl-tRNA or glutaminyl-tRNA synthetases. The reaction takes place in the presence of glutamine and ATP through an activated phospho-Asp-tRNA(Asn) or phospho-Glu-tRNA(Gln). This chain is Aspartyl/glutamyl-tRNA(Asn/Gln) amidotransferase subunit C, found in Trichlorobacter lovleyi (strain ATCC BAA-1151 / DSM 17278 / SZ) (Geobacter lovleyi).